The sequence spans 318 residues: Acetyl-coenzyme A carboxylase carboxyl transferase subunit alpha (318 aa).

A CoA carboxyltransferase C-terminal domain is found at 38–292; it reads KLEKRLAKLE…NKTITKSLHA (255 aa).

This sequence belongs to the AccA family. In terms of assembly, acetyl-CoA carboxylase is a heterohexamer composed of biotin carboxyl carrier protein (AccB), biotin carboxylase (AccC) and two subunits each of ACCase subunit alpha (AccA) and ACCase subunit beta (AccD).

Its subcellular location is the cytoplasm. It catalyses the reaction N(6)-carboxybiotinyl-L-lysyl-[protein] + acetyl-CoA = N(6)-biotinyl-L-lysyl-[protein] + malonyl-CoA. It participates in lipid metabolism; malonyl-CoA biosynthesis; malonyl-CoA from acetyl-CoA: step 1/1. Its function is as follows. Component of the acetyl coenzyme A carboxylase (ACC) complex. First, biotin carboxylase catalyzes the carboxylation of biotin on its carrier protein (BCCP) and then the CO(2) group is transferred by the carboxyltransferase to acetyl-CoA to form malonyl-CoA. The protein is Acetyl-coenzyme A carboxylase carboxyl transferase subunit alpha of Listeria innocua serovar 6a (strain ATCC BAA-680 / CLIP 11262).